The sequence spans 155 residues: MAGIDEIDEVIVRELRKNSRITLTELGRKVGLTASAVKNRIEKLEKLGVIKGYSAVVDPSFFGEFLTAVIEIELIDPDSPDLPRILTPILKMRNISDVYKKTGEFHLVIRGTFRDVESLNTFLKDLKRNYLRNLARRTRISIVLENFKEAGVTLK.

The HTH asnC-type domain maps to 4-65; it reads IDEIDEVIVR…VVDPSFFGEF (62 aa). The H-T-H motif DNA-binding region spans 23 to 42; that stretch reads LTELGRKVGLTASAVKNRIE.

This is an uncharacterized protein from Pyrococcus horikoshii (strain ATCC 700860 / DSM 12428 / JCM 9974 / NBRC 100139 / OT-3).